The following is a 109-amino-acid chain: Large ribosomal subunit protein uL22 (109 aa).

It belongs to the universal ribosomal protein uL22 family. Part of the 50S ribosomal subunit.

Its function is as follows. This protein binds specifically to 23S rRNA; its binding is stimulated by other ribosomal proteins, e.g. L4, L17, and L20. It is important during the early stages of 50S assembly. It makes multiple contacts with different domains of the 23S rRNA in the assembled 50S subunit and ribosome. In terms of biological role, the globular domain of the protein is located near the polypeptide exit tunnel on the outside of the subunit, while an extended beta-hairpin is found that lines the wall of the exit tunnel in the center of the 70S ribosome. In Chromobacterium violaceum (strain ATCC 12472 / DSM 30191 / JCM 1249 / CCUG 213 / NBRC 12614 / NCIMB 9131 / NCTC 9757 / MK), this protein is Large ribosomal subunit protein uL22.